Here is a 62-residue protein sequence, read N- to C-terminus: Large ribosomal subunit protein bL28 (62 aa).

The interval 1-27 (MAKECVITGRKSRSGNKRSHAMNSSKR) is disordered. Basic residues predominate over residues 10 to 20 (RKSRSGNKRSH).

The protein belongs to the bacterial ribosomal protein bL28 family.

The sequence is that of Large ribosomal subunit protein bL28 from Listeria innocua serovar 6a (strain ATCC BAA-680 / CLIP 11262).